Consider the following 224-residue polypeptide: Large ribosomal subunit protein bL25 (224 aa).

Belongs to the bacterial ribosomal protein bL25 family. CTC subfamily. Part of the 50S ribosomal subunit; part of the 5S rRNA/L5/L18/L25 subcomplex. Contacts the 5S rRNA. Binds to the 5S rRNA independently of L5 and L18.

Its function is as follows. This is one of the proteins that binds to the 5S RNA in the ribosome where it forms part of the central protuberance. The polypeptide is Large ribosomal subunit protein bL25 (Psychrobacter arcticus (strain DSM 17307 / VKM B-2377 / 273-4)).